Consider the following 196-residue polypeptide: dITP/XTP pyrophosphatase (196 aa).

7–12 (TGNAGK) serves as a coordination point for substrate. Residues E39 and D68 each contribute to the Mg(2+) site. D68 functions as the Proton acceptor in the catalytic mechanism. Substrate-binding positions include S69, 153–156 (HGYD), K176, and 181–182 (HR).

Belongs to the HAM1 NTPase family. Homodimer. Requires Mg(2+) as cofactor.

It catalyses the reaction XTP + H2O = XMP + diphosphate + H(+). It carries out the reaction dITP + H2O = dIMP + diphosphate + H(+). The enzyme catalyses ITP + H2O = IMP + diphosphate + H(+). Functionally, pyrophosphatase that catalyzes the hydrolysis of nucleoside triphosphates to their monophosphate derivatives, with a high preference for the non-canonical purine nucleotides XTP (xanthosine triphosphate), dITP (deoxyinosine triphosphate) and ITP. Seems to function as a house-cleaning enzyme that removes non-canonical purine nucleotides from the nucleotide pool, thus preventing their incorporation into DNA/RNA and avoiding chromosomal lesions. The protein is dITP/XTP pyrophosphatase of Thioalkalivibrio sulfidiphilus (strain HL-EbGR7).